A 557-amino-acid polypeptide reads, in one-letter code: Arginine--tRNA ligase (557 aa).

Positions 132–142 (ANPTGDLHLGH) match the 'HIGH' region motif.

This sequence belongs to the class-I aminoacyl-tRNA synthetase family. As to quaternary structure, monomer.

The protein localises to the cytoplasm. It carries out the reaction tRNA(Arg) + L-arginine + ATP = L-arginyl-tRNA(Arg) + AMP + diphosphate. This Geobacillus kaustophilus (strain HTA426) protein is Arginine--tRNA ligase.